The sequence spans 114 residues: Fluoride-specific ion channel FluC 2 (114 aa).

The next 3 membrane-spanning stretches (helical) occupy residues 30 to 50 (FPVATFLVNVAGCLILGLLSG), 57 to 77 (TFALLGTGFCGGLTTYSTFAV), and 88 to 108 (ALPSVVYVVASVAAGLAAAWL). Gly-67 and Thr-70 together coordinate Na(+).

The protein belongs to the fluoride channel Fluc/FEX (TC 1.A.43) family.

Its subcellular location is the cell membrane. The catalysed reaction is fluoride(in) = fluoride(out). With respect to regulation, na(+) is not transported, but it plays an essential structural role and its presence is essential for fluoride channel function. In terms of biological role, fluoride-specific ion channel. Important for reducing fluoride concentration in the cell, thus reducing its toxicity. This chain is Fluoride-specific ion channel FluC 2, found in Rhodococcus jostii (strain RHA1).